The chain runs to 976 residues: 3-hydroxy-3-methylglutaryl-coenzyme A reductase (976 aa).

Residues 1–36 are Lumenal-facing; it reads MDHEGCQGQHPQQCCQWVSNAWSEFLDLLKNAETLD. Residues 36-217 form the SSD domain; the sequence is DIVIMLLGYI…FTFYTAILSI (182 aa). Residues 37 to 57 form a helical membrane-spanning segment; sequence IVIMLLGYIAMHLTFVSLFLS. Topologically, residues 58-64 are cytoplasmic; the sequence is MRKMGSK. A helical membrane pass occupies residues 65–85; the sequence is FWLGICTLFSSVFAFLFGLVV. Residues 86–90 lie on the Lumenal side of the membrane; that stretch reads TTKLG. The chain crosses the membrane as a helical span at residues 91-111; that stretch reads VPISVILLSEGLPFLVVTIGF. Residues 112–169 are Cytoplasmic-facing; it reads EKNIVLTRAVMSHAIEHRRIQAQNSKSGKRSPDGSTQNMIQYAVQAAIKEKGFEIIRD. A helical membrane pass occupies residues 170-190; the sequence is YAIEIVILVIGAASGVQGGLQ. The Lumenal portion of the chain corresponds to 191 to 193; sequence QFC. Residues 194–214 traverse the membrane as a helical segment; that stretch reads FLAAWTLFFDFILLFTFYTAI. Residues 215 to 272 are Cytoplasmic-facing; it reads LSIKLRSTVSSVMSICVWPLRMMASRRVAENVAKGDDELNRVRGDAPLFGRKSSSIPK. A helical membrane pass occupies residues 273–293; the sequence is FKVLMILGFIFVNIVNICSIP. Topologically, residues 294 to 401 are lumenal; sequence FRNPSSMSTI…GGILKSLEDP (108 aa). A helical membrane pass occupies residues 402-422; that stretch reads VLSKWIVIALALSVALNGYLF. Over 423-976 the chain is Cytoplasmic; the sequence is NVARWGIKDP…RYSEVKAIDE (554 aa). E618 serves as the catalytic Charge relay system. 624 to 630 serves as a coordination point for CoA; the sequence is SASRGCK. NADP(+) is bound by residues 685-687 and 712-720; these read SRF and DAMGMNMIS. The active-site Charge relay system is K752. 781–783 is a binding site for CoA; sequence VLK. D828 functions as the Charge relay system in the catalytic mechanism. Residue 923 to 924 coordinates CoA; it reads AH. Residue H924 is the Proton donor of the active site. The tract at residues 926–954 is disordered; sequence QHNRSAAPSRSTTPGSSHDARLTGHDQCP. 928 to 929 serves as a coordination point for NADP(+); sequence NR. The segment covering 928–941 has biased composition (polar residues); the sequence is NRSAAPSRSTTPGS. A compositionally biased stretch (basic and acidic residues) spans 943–953; the sequence is HDARLTGHDQC.

This sequence belongs to the HMG-CoA reductase family.

The protein resides in the endoplasmic reticulum membrane. It catalyses the reaction (R)-mevalonate + 2 NADP(+) + CoA = (3S)-3-hydroxy-3-methylglutaryl-CoA + 2 NADPH + 2 H(+). The protein operates within metabolic intermediate biosynthesis; (R)-mevalonate biosynthesis; (R)-mevalonate from acetyl-CoA: step 3/3. Its function is as follows. HMG-CoA reductase; part of the first module of ergosterol biosynthesis pathway that includes the early steps of the pathway, conserved across all eukaryotes, and which results in the formation of mevalonate from acetyl-coenzyme A (acetyl-CoA). In this module, the cytosolic acetyl-CoA acetyltransferase catalyzes the formation of acetoacetyl-CoA. The hydroxymethylglutaryl-CoA synthase then condenses acetyl-CoA with acetoacetyl-CoA to form HMG-CoA. The rate-limiting step of the early module is the reduction to mevalonate by the 3-hydroxy-3-methylglutaryl-coenzyme A (HMG-CoA) reductase HMGR. This Fusarium fujikuroi (Bakanae and foot rot disease fungus) protein is 3-hydroxy-3-methylglutaryl-coenzyme A reductase.